Consider the following 265-residue polypeptide: Chlorophyll a-b binding protein 1C, chloroplastic (265 aa).

A chloroplast-targeting transit peptide spans 1 to 34 (MAAATMALSSPSFAGQAVKLSPSASEISGNGRIT). A helical membrane pass occupies residues 151-171 (LVHAQSILAIWACQVVLMGAV). Chlorophyll b is bound by residues Val-152, Ser-156, Gln-164, Glu-172, Arg-175, and Leu-181. Positions 212, 213, 216, 218, 230, 245, and 254 each coordinate chlorophyll a. The helical transmembrane segment at 219–239 (LAMFSMFGFFVQAIVTGKGPL) threads the bilayer. Phe-261 is a chlorophyll b binding site.

Belongs to the light-harvesting chlorophyll a/b-binding (LHC) protein family. The LHC complex consists of chlorophyll a-b binding proteins. Binds at least 14 chlorophylls (8 Chl-a and 6 Chl-b) and carotenoids such as lutein and neoxanthin. is required as a cofactor. Photoregulated by reversible phosphorylation of its threonine residues.

It localises to the plastid. It is found in the chloroplast thylakoid membrane. The light-harvesting complex (LHC) functions as a light receptor, it captures and delivers excitation energy to photosystems with which it is closely associated. This Solanum lycopersicum (Tomato) protein is Chlorophyll a-b binding protein 1C, chloroplastic (CAB1C).